The primary structure comprises 111 residues: Aspartate 1-decarboxylase (111 aa).

The Schiff-base intermediate with substrate; via pyruvic acid role is filled by serine 25. Serine 25 carries the pyruvic acid (Ser) modification. Substrate is bound at residue threonine 57. Catalysis depends on tyrosine 58, which acts as the Proton donor. A substrate-binding site is contributed by 73-75; it reads GPA.

It belongs to the PanD family. As to quaternary structure, heterooctamer of four alpha and four beta subunits. Pyruvate serves as cofactor. Is synthesized initially as an inactive proenzyme, which is activated by self-cleavage at a specific serine bond to produce a beta-subunit with a hydroxyl group at its C-terminus and an alpha-subunit with a pyruvoyl group at its N-terminus.

The protein localises to the cytoplasm. It catalyses the reaction L-aspartate + H(+) = beta-alanine + CO2. The protein operates within cofactor biosynthesis; (R)-pantothenate biosynthesis; beta-alanine from L-aspartate: step 1/1. Catalyzes the pyruvoyl-dependent decarboxylation of aspartate to produce beta-alanine. This chain is Aspartate 1-decarboxylase, found in Coxiella burnetii (strain RSA 493 / Nine Mile phase I).